The chain runs to 109 residues: Putative pterin-4-alpha-carbinolamine dehydratase (109 aa).

It belongs to the pterin-4-alpha-carbinolamine dehydratase family.

The catalysed reaction is (4aS,6R)-4a-hydroxy-L-erythro-5,6,7,8-tetrahydrobiopterin = (6R)-L-erythro-6,7-dihydrobiopterin + H2O. This chain is Putative pterin-4-alpha-carbinolamine dehydratase, found in Vibrio cholerae serotype O1 (strain ATCC 39315 / El Tor Inaba N16961).